We begin with the raw amino-acid sequence, 435 residues long: 5-methylthioadenosine/S-adenosylhomocysteine deaminase (435 aa).

The Zn(2+) site is built by histidine 65 and histidine 67. Substrate-binding residues include glutamate 94, arginine 150, and histidine 189. Zn(2+) is bound at residue histidine 216. 2 residues coordinate substrate: glutamate 219 and aspartate 304. Aspartate 304 lines the Zn(2+) pocket.

Belongs to the metallo-dependent hydrolases superfamily. MTA/SAH deaminase family. Requires Zn(2+) as cofactor.

The catalysed reaction is S-adenosyl-L-homocysteine + H2O + H(+) = S-inosyl-L-homocysteine + NH4(+). It carries out the reaction S-methyl-5'-thioadenosine + H2O + H(+) = S-methyl-5'-thioinosine + NH4(+). In terms of biological role, catalyzes the deamination of 5-methylthioadenosine and S-adenosyl-L-homocysteine into 5-methylthioinosine and S-inosyl-L-homocysteine, respectively. Is also able to deaminate adenosine. The protein is 5-methylthioadenosine/S-adenosylhomocysteine deaminase of Bacillus cereus (strain G9842).